A 130-amino-acid chain; its full sequence is Small ribosomal subunit protein uS8 (130 aa).

The protein belongs to the universal ribosomal protein uS8 family. In terms of assembly, part of the 30S ribosomal subunit. Contacts proteins S5 and S12.

Its function is as follows. One of the primary rRNA binding proteins, it binds directly to 16S rRNA central domain where it helps coordinate assembly of the platform of the 30S subunit. In Photobacterium profundum (strain SS9), this protein is Small ribosomal subunit protein uS8.